We begin with the raw amino-acid sequence, 55 residues long: Large ribosomal subunit protein bL33 (55 aa).

Belongs to the bacterial ribosomal protein bL33 family.

This chain is Large ribosomal subunit protein bL33, found in Allorhizobium ampelinum (strain ATCC BAA-846 / DSM 112012 / S4) (Agrobacterium vitis (strain S4)).